The following is a 170-amino-acid chain: MIDHALALTHIDERGAARMVDVSEKPVTLRVAKASGLVIMKPSTLRMISDGAAAKGDVMAAARIAGIAAAKRTGDLIPLCHPLGLDAVSVTITPCEPDRVKILATTTTLGRTGVEMEALTAVSVAALTIYDMCKAVDRAMEISQIVLQEKSGGRSGVYRRSASDLACQSR.

Residues 79–81 (LCH) and 116–117 (ME) contribute to the substrate site. Aspartate 131 is a catalytic residue.

The protein belongs to the MoaC family. As to quaternary structure, homohexamer; trimer of dimers.

It carries out the reaction (8S)-3',8-cyclo-7,8-dihydroguanosine 5'-triphosphate = cyclic pyranopterin phosphate + diphosphate. It functions in the pathway cofactor biosynthesis; molybdopterin biosynthesis. Functionally, catalyzes the conversion of (8S)-3',8-cyclo-7,8-dihydroguanosine 5'-triphosphate to cyclic pyranopterin monophosphate (cPMP). The polypeptide is Cyclic pyranopterin monophosphate synthase 1 (moaC1) (Mycobacterium bovis (strain ATCC BAA-935 / AF2122/97)).